The sequence spans 972 residues: Fibroblast growth factor receptor (972 aa).

The first 43 residues, Met1–Ala43, serve as a signal peptide directing secretion. The Extracellular portion of the chain corresponds to Gly44–Gln547. The region spanning Ala57–Ile152 is the Fibronectin type-III domain. 12 N-linked (GlcNAc...) asparagine glycosylation sites follow: Asn109, Asn121, Asn191, Asn203, Asn239, Asn272, Asn315, Asn390, Asn398, Asn419, Asn422, and Asn460. An Ig-like C2-type 1 domain is found at Pro150–Leu242. Cys176 and Cys226 are oxidised to a cystine. Ig-like C2-type domains are found at residues Pro282 to Lys374 and Pro383 to Asp517. Cysteines 306 and 358 form a disulfide. Cysteines 403 and 501 form a disulfide. A helical membrane pass occupies residues Leu548 to Ile568. Over Leu569–Asn972 the chain is Cytoplasmic. The 287-residue stretch at Leu639–Leu925 folds into the Protein kinase domain. Residues Ile645–Val653 and Lys673 each bind ATP. Residue Asp781 is the Proton acceptor of the active site. Tyr812 carries the post-translational modification Phosphotyrosine; by autocatalysis.

It belongs to the protein kinase superfamily. Tyr protein kinase family. Fibroblast growth factor receptor subfamily.

It localises to the membrane. The catalysed reaction is L-tyrosyl-[protein] + ATP = O-phospho-L-tyrosyl-[protein] + ADP + H(+). Receptor for basic fibroblast growth factor. In Strongylocentrotus purpuratus (Purple sea urchin), this protein is Fibroblast growth factor receptor (FGFR).